The sequence spans 185 residues: Elongation factor P (185 aa).

It belongs to the elongation factor P family.

The protein resides in the cytoplasm. Its pathway is protein biosynthesis; polypeptide chain elongation. In terms of biological role, involved in peptide bond synthesis. Stimulates efficient translation and peptide-bond synthesis on native or reconstituted 70S ribosomes in vitro. Probably functions indirectly by altering the affinity of the ribosome for aminoacyl-tRNA, thus increasing their reactivity as acceptors for peptidyl transferase. This chain is Elongation factor P, found in Clostridioides difficile (strain 630) (Peptoclostridium difficile).